Reading from the N-terminus, the 844-residue chain is Protein translocase subunit SecA 1 (844 aa).

ATP-binding positions include Gln-91, 109–113 (GEGKT), and Asp-498. Over residues 793-813 (KSKSFGEAKHVTAEDGKEKAK) the composition is skewed to basic and acidic residues. The interval 793-825 (KSKSFGEAKHVTAEDGKEKAKPQPIVKGDQVGR) is disordered. Cys-829, Cys-831, Cys-840, and His-841 together coordinate Zn(2+).

This sequence belongs to the SecA family. Monomer and homodimer. Part of the essential Sec protein translocation apparatus which comprises SecA, SecYEG and auxiliary proteins SecDF. Other proteins may also be involved. It depends on Zn(2+) as a cofactor.

It is found in the cell membrane. Its subcellular location is the cytoplasm. It carries out the reaction ATP + H2O + cellular proteinSide 1 = ADP + phosphate + cellular proteinSide 2.. Part of the Sec protein translocase complex. Interacts with the SecYEG preprotein conducting channel. Has a central role in coupling the hydrolysis of ATP to the transfer of proteins into and across the cell membrane, serving as an ATP-driven molecular motor driving the stepwise translocation of polypeptide chains across the membrane. In Staphylococcus epidermidis (strain ATCC 35984 / DSM 28319 / BCRC 17069 / CCUG 31568 / BM 3577 / RP62A), this protein is Protein translocase subunit SecA 1.